Consider the following 161-residue polypeptide: 6,7-dimethyl-8-ribityllumazine synthase (161 aa).

Residues Trp-25, 57 to 59, and 80 to 82 contribute to the 5-amino-6-(D-ribitylamino)uracil site; these read AFE and VVI. 85–86 lines the (2S)-2-hydroxy-3-oxobutyl phosphate pocket; the sequence is GT. His-88 acts as the Proton donor in catalysis. Position 113 (Phe-113) interacts with 5-amino-6-(D-ribitylamino)uracil. Arg-127 is a (2S)-2-hydroxy-3-oxobutyl phosphate binding site.

Belongs to the DMRL synthase family.

It carries out the reaction (2S)-2-hydroxy-3-oxobutyl phosphate + 5-amino-6-(D-ribitylamino)uracil = 6,7-dimethyl-8-(1-D-ribityl)lumazine + phosphate + 2 H2O + H(+). The protein operates within cofactor biosynthesis; riboflavin biosynthesis; riboflavin from 2-hydroxy-3-oxobutyl phosphate and 5-amino-6-(D-ribitylamino)uracil: step 1/2. Functionally, catalyzes the formation of 6,7-dimethyl-8-ribityllumazine by condensation of 5-amino-6-(D-ribitylamino)uracil with 3,4-dihydroxy-2-butanone 4-phosphate. This is the penultimate step in the biosynthesis of riboflavin. In Kineococcus radiotolerans (strain ATCC BAA-149 / DSM 14245 / SRS30216), this protein is 6,7-dimethyl-8-ribityllumazine synthase.